The sequence spans 944 residues: Leucine--tRNA ligase (944 aa).

Residues 40 to 51 (PYPSGAGLHVGH) carry the 'HIGH' region motif. The 'KMSKS' region signature appears at 718-722 (KMSKS). Lys-721 lines the ATP pocket.

The protein belongs to the class-I aminoacyl-tRNA synthetase family.

It is found in the cytoplasm. It catalyses the reaction tRNA(Leu) + L-leucine + ATP = L-leucyl-tRNA(Leu) + AMP + diphosphate. This chain is Leucine--tRNA ligase, found in Bacteroides thetaiotaomicron (strain ATCC 29148 / DSM 2079 / JCM 5827 / CCUG 10774 / NCTC 10582 / VPI-5482 / E50).